Consider the following 434-residue polypeptide: Beta-enolase (434 aa).

Residue alanine 2 is modified to N-acetylalanine. Residue threonine 72 is modified to Phosphothreonine. Residues serine 83 and serine 157 each carry the phosphoserine modification. The substrate site is built by histidine 158 and glutamate 167. The residue at position 176 (serine 176) is a Phosphoserine. Threonine 205 carries the phosphothreonine modification. Residue glutamate 210 is the Proton donor of the active site. Position 229 is a phosphothreonine (threonine 229). Tyrosine 236 carries the post-translational modification Phosphotyrosine. Position 245 (aspartate 245) interacts with Mg(2+). A Phosphoserine modification is found at serine 263. Substrate is bound by residues glutamate 293 and aspartate 318. Mg(2+)-binding residues include glutamate 293 and aspartate 318. Lysine 343 acts as the Proton acceptor in catalysis. Residues 370 to 373 (SHRS) and lysine 394 each bind substrate.

This sequence belongs to the enolase family. Mammalian enolase is composed of 3 isozyme subunits, alpha, beta and gamma, which can form homodimers or heterodimers which are cell-type and development-specific. Interacts with PNKD. Mg(2+) is required as a cofactor.

The protein localises to the cytoplasm. The catalysed reaction is (2R)-2-phosphoglycerate = phosphoenolpyruvate + H2O. It functions in the pathway carbohydrate degradation; glycolysis; pyruvate from D-glyceraldehyde 3-phosphate: step 4/5. In terms of biological role, glycolytic enzyme that catalyzes the conversion of 2-phosphoglycerate to phosphoenolpyruvate. Appears to have a function in striated muscle development and regeneration. In Sus scrofa (Pig), this protein is Beta-enolase (ENO3).